A 429-amino-acid polypeptide reads, in one-letter code: 3-isopropylmalate dehydratase large subunit (429 aa).

Cys303, Cys363, and Cys366 together coordinate [4Fe-4S] cluster.

It belongs to the aconitase/IPM isomerase family. LeuC type 2 subfamily. Heterodimer of LeuC and LeuD. [4Fe-4S] cluster is required as a cofactor.

It catalyses the reaction (2R,3S)-3-isopropylmalate = (2S)-2-isopropylmalate. It participates in amino-acid biosynthesis; L-leucine biosynthesis; L-leucine from 3-methyl-2-oxobutanoate: step 2/4. Catalyzes the isomerization between 2-isopropylmalate and 3-isopropylmalate, via the formation of 2-isopropylmaleate. The sequence is that of 3-isopropylmalate dehydratase large subunit from Caldicellulosiruptor saccharolyticus (strain ATCC 43494 / DSM 8903 / Tp8T 6331).